An 802-amino-acid polypeptide reads, in one-letter code: Copal-8-ol diphosphate hydratase, chloroplastic (802 aa).

Residues 1-24 (MQVIITSSHRFFCHHLHQLKSPTS) constitute a chloroplast transit peptide. K249 contacts substrate. Residues D382 and D384 each contribute to the Mg(2+) site. The DXDD motif motif lies at 382-385 (DVDD). K468 is a binding site for substrate.

The protein belongs to the terpene synthase family. Mg(2+) is required as a cofactor. As to expression, expressed specifically in the secretory cells of the glandular trichomes.

Its subcellular location is the plastid. The protein resides in the chloroplast. It carries out the reaction (2E,6E,10E)-geranylgeranyl diphosphate + H2O = 8-hydroxycopalyl diphosphate. It functions in the pathway secondary metabolite biosynthesis; terpenoid biosynthesis. Its function is as follows. Class-II terpene synthase that synthesizes 8-hydroxy-copalyl diphosphate. Involved in the biosynthesis of cis-abienol, a labdane diterpene that can be used as synthesis precursor of ambergris substitution fragance products. The polypeptide is Copal-8-ol diphosphate hydratase, chloroplastic (Nicotiana tabacum (Common tobacco)).